The following is a 117-amino-acid chain: Large ribosomal subunit protein bL20 (117 aa).

It belongs to the bacterial ribosomal protein bL20 family.

Functionally, binds directly to 23S ribosomal RNA and is necessary for the in vitro assembly process of the 50S ribosomal subunit. It is not involved in the protein synthesizing functions of that subunit. This chain is Large ribosomal subunit protein bL20, found in Carboxydothermus hydrogenoformans (strain ATCC BAA-161 / DSM 6008 / Z-2901).